The sequence spans 336 residues: tRNA N6-adenosine threonylcarbamoyltransferase (336 aa).

The Fe cation site is built by H114 and H118. Residues 136–140, D169, G182, D186, and N275 contribute to the substrate site; that span reads LVSGG. D301 contacts Fe cation.

It belongs to the KAE1 / TsaD family. The cofactor is Fe(2+).

It localises to the cytoplasm. The enzyme catalyses L-threonylcarbamoyladenylate + adenosine(37) in tRNA = N(6)-L-threonylcarbamoyladenosine(37) in tRNA + AMP + H(+). Its function is as follows. Required for the formation of a threonylcarbamoyl group on adenosine at position 37 (t(6)A37) in tRNAs that read codons beginning with adenine. Is involved in the transfer of the threonylcarbamoyl moiety of threonylcarbamoyl-AMP (TC-AMP) to the N6 group of A37, together with TsaE and TsaB. TsaD likely plays a direct catalytic role in this reaction. This is tRNA N6-adenosine threonylcarbamoyltransferase from Streptococcus pneumoniae serotype 4 (strain ATCC BAA-334 / TIGR4).